Reading from the N-terminus, the 271-residue chain is Probable L,D-transpeptidase 3 (271 aa).

The L,D-TPase catalytic domain maps to 127–270 (VVGVASISQH…VDIGDPVIVQ (144 aa)). The active-site Proton donor/acceptor is the H228. The active-site Nucleophile is C246.

The protein operates within cell wall biogenesis; peptidoglycan biosynthesis. Its activity is regulated as follows. Is irreversibly inactivated by the beta-lactam carbapenems via the formation of a covalent adduct resulting from acylation of the catalytic Cys. Imipenem is the most efficient drug for in vitro LdtMt3/Rv1433 inactivation. In terms of biological role, probable L,D-transpeptidase that may perform as-yet-unknown cross-linking reactions in M.tuberculosis. Is not able to generate 3-&gt;3 cross-links in peptidoglycan, using tetrapeptide stems as acyl donor substrates. May function in the anchoring of proteins to peptidoglycan. This is Probable L,D-transpeptidase 3 from Mycobacterium tuberculosis (strain ATCC 25618 / H37Rv).